We begin with the raw amino-acid sequence, 306 residues long: UDP-3-O-acyl-N-acetylglucosamine deacetylase (306 aa).

Residues His-79, His-238, and Asp-242 each coordinate Zn(2+). The Proton donor role is filled by His-265.

Belongs to the LpxC family. Zn(2+) is required as a cofactor.

The catalysed reaction is a UDP-3-O-[(3R)-3-hydroxyacyl]-N-acetyl-alpha-D-glucosamine + H2O = a UDP-3-O-[(3R)-3-hydroxyacyl]-alpha-D-glucosamine + acetate. It participates in glycolipid biosynthesis; lipid IV(A) biosynthesis; lipid IV(A) from (3R)-3-hydroxytetradecanoyl-[acyl-carrier-protein] and UDP-N-acetyl-alpha-D-glucosamine: step 2/6. In terms of biological role, catalyzes the hydrolysis of UDP-3-O-myristoyl-N-acetylglucosamine to form UDP-3-O-myristoylglucosamine and acetate, the committed step in lipid A biosynthesis. This Idiomarina loihiensis (strain ATCC BAA-735 / DSM 15497 / L2-TR) protein is UDP-3-O-acyl-N-acetylglucosamine deacetylase.